A 406-amino-acid polypeptide reads, in one-letter code: Kelch domain-containing protein 1 (406 aa).

Kelch repeat units lie at residues 24–76, 80–134, 135–181, 208–258, 260–307, and 311–361; these read FLYV…CGAC, KLYI…VYKD, RLIY…TKTQ, KGYI…PIAD, KLFL…ACLG, and EIMV…LESQ.

As to quaternary structure, component of a CRL5 E3 ubiquitin-protein ligase complex, also named ECS (Elongin BC-CUL2/5-SOCS-box protein) complex, composed of CUL5, Elongin BC (ELOB and ELOC), RBX1 and substrate-specific adapter KLHDC1. Widely expressed, with high levels in skeletal muscle, pancreas and liver. Undetectable in peripheral blood leukocytes.

The protein resides in the cytoplasm. The protein localises to the cytosol. The protein operates within protein modification; protein ubiquitination. Substrate-recognition component of a Cul5-RING (CRL5) E3 ubiquitin-protein ligase complex of the DesCEND (destruction via C-end degrons) pathway, which recognizes a C-degron located at the extreme C terminus of target proteins, leading to their ubiquitination and degradation. The C-degron recognized by the DesCEND pathway is usually a motif of less than ten residues and can be present in full-length proteins, truncated proteins or proteolytically cleaved forms. The CRL5(KLHDC1) complex mediates ubiquitination and degradation of truncated SELENOS selenoprotein produced by failed UGA/Sec decoding, which ends with a glycine. The polypeptide is Kelch domain-containing protein 1 (Homo sapiens (Human)).